A 203-amino-acid polypeptide reads, in one-letter code: Holliday junction branch migration complex subunit RuvA (203 aa).

Residues 1–63 are domain I; the sequence is MIAFVSGPVA…EDSLTLYGFV (63 aa). Residues 64–141 are domain II; that stretch reads DDDERQVFEL…GEPLGTGGPA (78 aa). A flexible linker region spans residues 141-145; it reads AIGRA. A domain III region spans residues 146 to 203; it reads VTTGWREQLHAALIGLGYATREADEAVAAVAPQAEAAGGTPQVGQLLKAALQTLNRTR.

It belongs to the RuvA family. As to quaternary structure, homotetramer. Forms an RuvA(8)-RuvB(12)-Holliday junction (HJ) complex. HJ DNA is sandwiched between 2 RuvA tetramers; dsDNA enters through RuvA and exits via RuvB. An RuvB hexamer assembles on each DNA strand where it exits the tetramer. Each RuvB hexamer is contacted by two RuvA subunits (via domain III) on 2 adjacent RuvB subunits; this complex drives branch migration. In the full resolvosome a probable DNA-RuvA(4)-RuvB(12)-RuvC(2) complex forms which resolves the HJ.

The protein resides in the cytoplasm. In terms of biological role, the RuvA-RuvB-RuvC complex processes Holliday junction (HJ) DNA during genetic recombination and DNA repair, while the RuvA-RuvB complex plays an important role in the rescue of blocked DNA replication forks via replication fork reversal (RFR). RuvA specifically binds to HJ cruciform DNA, conferring on it an open structure. The RuvB hexamer acts as an ATP-dependent pump, pulling dsDNA into and through the RuvAB complex. HJ branch migration allows RuvC to scan DNA until it finds its consensus sequence, where it cleaves and resolves the cruciform DNA. The sequence is that of Holliday junction branch migration complex subunit RuvA from Streptomyces avermitilis (strain ATCC 31267 / DSM 46492 / JCM 5070 / NBRC 14893 / NCIMB 12804 / NRRL 8165 / MA-4680).